A 501-amino-acid polypeptide reads, in one-letter code: Aerobic glycerol-3-phosphate dehydrogenase (501 aa).

FAD is bound at residue 5–33; the sequence is DLIVIGGGINGAGIAADAAGRGLSVLMLE.

This sequence belongs to the FAD-dependent glycerol-3-phosphate dehydrogenase family. Requires FAD as cofactor.

The protein localises to the cytoplasm. It catalyses the reaction a quinone + sn-glycerol 3-phosphate = dihydroxyacetone phosphate + a quinol. It functions in the pathway polyol metabolism; glycerol degradation via glycerol kinase pathway; glycerone phosphate from sn-glycerol 3-phosphate (aerobic route): step 1/1. Its function is as follows. Conversion of glycerol 3-phosphate to dihydroxyacetone. Uses molecular oxygen or nitrate as electron acceptor. The polypeptide is Aerobic glycerol-3-phosphate dehydrogenase (glpD) (Escherichia coli (strain K12)).